A 255-amino-acid chain; its full sequence is MFKVRVIPCLDVKDGRVVKGVNFVDLRDAGDPVEAAIAYDAAGADELCFLDITATHENRGIMLDVVRRTAEACFMPVTVGGGVRTVDDIKTLLRSGADKVSINSAAVARREFVKEAAEKFGDQCIVVAIDAKRVPGRDRWEIFTHGGRKGTGIDAIEFAQEVVSLGAGEILLTSMDRDGTKSGFDIPLTRAIADSVGVPVIASGGVGNLDHLVDGIREGHATAVLAASIFHFGEYTIRQAKDHMVQAGLPMRLDP.

Active-site residues include Asp-11 and Asp-130.

Belongs to the HisA/HisF family. As to quaternary structure, heterodimer of HisH and HisF.

It localises to the cytoplasm. It carries out the reaction 5-[(5-phospho-1-deoxy-D-ribulos-1-ylimino)methylamino]-1-(5-phospho-beta-D-ribosyl)imidazole-4-carboxamide + L-glutamine = D-erythro-1-(imidazol-4-yl)glycerol 3-phosphate + 5-amino-1-(5-phospho-beta-D-ribosyl)imidazole-4-carboxamide + L-glutamate + H(+). It participates in amino-acid biosynthesis; L-histidine biosynthesis; L-histidine from 5-phospho-alpha-D-ribose 1-diphosphate: step 5/9. Its function is as follows. IGPS catalyzes the conversion of PRFAR and glutamine to IGP, AICAR and glutamate. The HisF subunit catalyzes the cyclization activity that produces IGP and AICAR from PRFAR using the ammonia provided by the HisH subunit. In Rhodopseudomonas palustris (strain ATCC BAA-98 / CGA009), this protein is Imidazole glycerol phosphate synthase subunit HisF.